We begin with the raw amino-acid sequence, 370 residues long: Doublesex- and mab-3-related transcription factor C2 (370 aa).

A disordered region spans residues methionine 1 to arginine 38. Residues cysteine 42 to arginine 89 constitute a DNA-binding region (DM). The tract at residues alanine 334 to valine 356 is disordered.

Belongs to the DMRT family. Expressed in testis. Highly expressed in ovary.

The protein resides in the nucleus. Functionally, may be involved in sexual development. In Mus musculus (Mouse), this protein is Doublesex- and mab-3-related transcription factor C2 (Dmrtc2).